A 2157-amino-acid polypeptide reads, in one-letter code: Conidial yellow pigment biosynthesis polyketide synthase (2157 aa).

Positions 8–244 (YLFGDQTGDF…VMVPIHGPFH (237 aa)) are N-terminal acylcarrier protein transacylase domain (SAT). Residues 376–807 (LSKIAIIGMS…GGNTALLLED (432 aa)) enclose the Ketosynthase family 3 (KS3) domain. Catalysis depends on for beta-ketoacyl synthase activity residues Cys548, His683, and His725. Residues 912 to 1232 (FLFTGQGAQY…LSSLYLAGVD (321 aa)) form a malonyl-CoA:ACP transacylase (MAT) domain region. Ser1001 (for acyl/malonyl transferase activity) is an active-site residue. Positions 1290 to 1603 (TTSAQRVVES…RKILDIALPP (314 aa)) are product template (PT) domain. Positions 1294 to 1425 (QRVVESRDDG…CEVKLFDCMA (132 aa)) are N-terminal hotdog fold. One can recognise a PKS/mFAS DH domain in the interval 1294–1598 (QRVVESRDDG…FQALSRKILD (305 aa)). His1326 serves as the catalytic Proton acceptor; for dehydratase activity. Residues 1453-1598 (AHRLRRGMVY…FQALSRKILD (146 aa)) form a C-terminal hotdog fold region. The active-site Proton donor; for dehydratase activity is the Asp1511. A disordered region spans residues 1607–1638 (SKAQTSPIQSSAPQKPIETAKPTSRPAPPVTM). A compositionally biased stretch (polar residues) spans 1608–1619 (KAQTSPIQSSAP). The Carrier 1 domain occupies 1645–1722 (SAGPSVVVRA…DFKRFVTQLS (78 aa)). O-(pantetheine 4'-phosphoryl)serine is present on Ser1682. The interval 1725–1760 (VASDSSSTDRESEYSFNGDSCSGLSSPASPGTVSPP) is disordered. Residues 1741–1759 (NGDSCSGLSSPASPGTVSP) are compositionally biased toward polar residues. Positions 1767-1844 (IHENGTMKEI…QIETALDLKP (78 aa)) constitute a Carrier 2 domain. Ser1804 is subject to O-(pantetheine 4'-phosphoryl)serine. The segment at 1847 to 1888 (VPTAVPQSQPITLPQSQSTKQLSTRPTSSSDNHPPATSILLQ) is disordered. Polar residues predominate over residues 1851–1878 (VPQSQPITLPQSQSTKQLSTRPTSSSDN). The interval 1877–2149 (DNHPPATSIL…ELATFMKNAL (273 aa)) is claisen cyclase domain. Catalysis depends on Ser1967, which acts as the For thioesterase activity.

The cofactor is pantetheine 4'-phosphate.

The enzyme catalyses 6 malonyl-CoA + acetyl-CoA + 6 H(+) = naphtopyrone YWA1 + 6 CO2 + 7 CoA + H2O. It participates in polyketide biosynthesis; heptaketide naphthopyrone YWA1 biosynthesis. Its function is as follows. Non-reducing polyketide synthase that condenses acetate units to form a heptaketide naphthopyrene YWA1, a yellow pigment found in mature asexual spores (conidia), via a polyketomethylene intermediate step. This is Conidial yellow pigment biosynthesis polyketide synthase from Emericella nidulans (strain FGSC A4 / ATCC 38163 / CBS 112.46 / NRRL 194 / M139) (Aspergillus nidulans).